Consider the following 234-residue polypeptide: Mannose/glucose-specific lectin Cramoll (234 aa).

The Mn(2+) site is built by Glu-8 and Asp-10. Ca(2+) contacts are provided by Asp-10, Tyr-12, Asn-14, and Asp-19. Tyr-12 lines the a carbohydrate pocket. Residues Asp-19, His-24, and Ser-34 each contribute to the Mn(2+) site. Residue 99–100 coordinates a carbohydrate; it reads LY. Asp-205 provides a ligand contact to Ca(2+). Arg-225 lines the a carbohydrate pocket.

The protein belongs to the leguminous lectin family. Homotetramer. Post-translationally, the alpha and beta chains are produced by partial proteolytic processing of the lectin precursor by an asparaginyl endopeptidase.

Functionally, glucose/D-mannose specific lectin. In Cratylia mollis (Camaratu bean), this protein is Mannose/glucose-specific lectin Cramoll.